Here is a 514-residue protein sequence, read N- to C-terminus: Cardiolipin synthase 2 (514 aa).

3 helical membrane-spanning segments follow: residues 7–27 (LIFFVLLLFALFVSLRMFIDV), 41–61 (ILGIISILFTVSAFLIGCVIF), and 71–91 (LTWLIVLGIFPVFGFFAYLLF). PLD phosphodiesterase domains lie at 249 to 276 (INYRNHRKIVIIDGNEGFVGGLNIGDEY) and 427 to 454 (EKGFLHSKVVIVDSDLASIGTANMDMRS). Residues His-254, Lys-256, Asp-261, His-432, Lys-434, and Asp-439 contribute to the active site.

This sequence belongs to the phospholipase D family. Cardiolipin synthase subfamily.

It localises to the cell membrane. The enzyme catalyses 2 a 1,2-diacyl-sn-glycero-3-phospho-(1'-sn-glycerol) = a cardiolipin + glycerol. In terms of biological role, catalyzes the reversible phosphatidyl group transfer from one phosphatidylglycerol molecule to another to form cardiolipin (CL) (diphosphatidylglycerol) and glycerol. This Bacillus anthracis protein is Cardiolipin synthase 2 (cls2).